Consider the following 125-residue polypeptide: MPTISQLVRKGRKSTAVKSTAPALKECPQKRGVCTVVKTTTPKKPNSALRKIARVRLTNGFEVTAYIGGVGHNLQEHSVVLIRGGRVKDLPGVRYHIVRGALDCAGVANRMQGRSKYGAKKPKQK.

Position 89 is a 3-methylthioaspartic acid (Asp89).

The protein belongs to the universal ribosomal protein uS12 family. In terms of assembly, part of the 30S ribosomal subunit. Contacts proteins S8 and S17. May interact with IF1 in the 30S initiation complex.

In terms of biological role, with S4 and S5 plays an important role in translational accuracy. Functionally, interacts with and stabilizes bases of the 16S rRNA that are involved in tRNA selection in the A site and with the mRNA backbone. Located at the interface of the 30S and 50S subunits, it traverses the body of the 30S subunit contacting proteins on the other side and probably holding the rRNA structure together. The combined cluster of proteins S8, S12 and S17 appears to hold together the shoulder and platform of the 30S subunit. The protein is Small ribosomal subunit protein uS12 of Clostridium botulinum (strain Alaska E43 / Type E3).